We begin with the raw amino-acid sequence, 203 residues long: uncharacterized protein (203 aa).

Fe cation is bound by residues histidine 34, glutamate 97, and histidine 172.

This sequence belongs to the hemerythrin family.

It is found in the mitochondrion. This is an uncharacterized protein from Schizosaccharomyces pombe (strain 972 / ATCC 24843) (Fission yeast).